Reading from the N-terminus, the 181-residue chain is Probable nicotinate-nucleotide adenylyltransferase (181 aa).

The protein belongs to the NadD family.

It carries out the reaction nicotinate beta-D-ribonucleotide + ATP + H(+) = deamido-NAD(+) + diphosphate. Its pathway is cofactor biosynthesis; NAD(+) biosynthesis; deamido-NAD(+) from nicotinate D-ribonucleotide: step 1/1. Functionally, catalyzes the reversible adenylation of nicotinate mononucleotide (NaMN) to nicotinic acid adenine dinucleotide (NaAD). In Campylobacter fetus subsp. fetus (strain 82-40), this protein is Probable nicotinate-nucleotide adenylyltransferase.